Consider the following 553-residue polypeptide: Dihydroxy-acid dehydratase (553 aa).

A Mg(2+)-binding site is contributed by Asp78. Cys119 contributes to the [2Fe-2S] cluster binding site. Positions 120 and 121 each coordinate Mg(2+). The residue at position 121 (Lys121) is an N6-carboxylysine. Cys191 is a [2Fe-2S] cluster binding site. Residue Glu442 coordinates Mg(2+). Ser468 serves as the catalytic Proton acceptor.

Belongs to the IlvD/Edd family. In terms of assembly, homodimer. [2Fe-2S] cluster serves as cofactor. The cofactor is Mg(2+).

The enzyme catalyses (2R)-2,3-dihydroxy-3-methylbutanoate = 3-methyl-2-oxobutanoate + H2O. It carries out the reaction (2R,3R)-2,3-dihydroxy-3-methylpentanoate = (S)-3-methyl-2-oxopentanoate + H2O. Its pathway is amino-acid biosynthesis; L-isoleucine biosynthesis; L-isoleucine from 2-oxobutanoate: step 3/4. The protein operates within amino-acid biosynthesis; L-valine biosynthesis; L-valine from pyruvate: step 3/4. Functions in the biosynthesis of branched-chain amino acids. Catalyzes the dehydration of (2R,3R)-2,3-dihydroxy-3-methylpentanoate (2,3-dihydroxy-3-methylvalerate) into 2-oxo-3-methylpentanoate (2-oxo-3-methylvalerate) and of (2R)-2,3-dihydroxy-3-methylbutanoate (2,3-dihydroxyisovalerate) into 2-oxo-3-methylbutanoate (2-oxoisovalerate), the penultimate precursor to L-isoleucine and L-valine, respectively. This Carboxydothermus hydrogenoformans (strain ATCC BAA-161 / DSM 6008 / Z-2901) protein is Dihydroxy-acid dehydratase.